The sequence spans 451 residues: Gamma-aminobutyric acid receptor subunit alpha-2 (451 aa).

The N-terminal stretch at 1-28 (MKTKLNSSNMQLLLFVFLAWDPARLVLA) is a signal peptide. At 29-249 (NIQEDEAKNN…MTAHFHLKRK (221 aa)) the chain is on the extracellular side. A glycan (N-linked (GlcNAc...) asparagine) is linked at asparagine 38. Arginine 94 contributes to the 4-aminobutanoate binding site. N-linked (GlcNAc...) asparagine glycosylation occurs at asparagine 138. Threonine 157 is a 4-aminobutanoate binding site. Cysteine 166 and cysteine 180 are joined by a disulfide. Asparagine 201 carries N-linked (GlcNAc...) asparagine glycosylation. The helical transmembrane segment at 250-270 (IGYFVIQTYLPCIMTVILSQV) threads the bilayer. Residues 271 to 280 (SFWLNRESVP) are Cytoplasmic-facing. Residues 281–300 (ARTVFGVTTVLTMTTLSISA) traverse the membrane as a helical segment. At 301-311 (RNSLPKVAYAT) the chain is on the extracellular side. A helical membrane pass occupies residues 312-332 (AMDWFIAVCYAFVFSALIEFA). Topologically, residues 333–420 (TVNYFTKRGW…FNSVSKIDRM (88 aa)) are cytoplasmic. Residues 421-441 (SRIVFPVLFGTFNLVYWATYL) traverse the membrane as a helical segment. The Extracellular segment spans residues 442 to 451 (NREPVLGVSP).

It belongs to the ligand-gated ion channel (TC 1.A.9) family. Gamma-aminobutyric acid receptor (TC 1.A.9.5) subfamily. GABRA2 sub-subfamily. As to quaternary structure, heteropentamer, formed by a combination of alpha (GABRA1-6), beta (GABRB1-3), gamma (GABRG1-3), delta (GABRD), epsilon (GABRE), rho (GABRR1-3), pi (GABRP) and theta (GABRQ) subunits, each subunit exhibiting distinct physiological and pharmacological properties. Interacts with UBQLN1. Interacts with KIF21B. Interacts with LHFPL4. Interacts with SHISA7; interaction leads to the regulation of GABA(A) receptor trafficking, channel deactivation kinetics and pharmacology. Glycosylated.

The protein resides in the postsynaptic cell membrane. Its subcellular location is the cell membrane. It is found in the cytoplasmic vesicle membrane. The protein localises to the cell projection. It localises to the dendrite. It carries out the reaction chloride(in) = chloride(out). Its activity is regulated as follows. Activated by pentobarbital. Inhibited by the antagonist bicuculline. Functionally, alpha subunit of the heteropentameric ligand-gated chloride channel gated by gamma-aminobutyric acid (GABA), a major inhibitory neurotransmitter in the brain. GABA-gated chloride channels, also named GABA(A) receptors (GABAAR), consist of five subunits arranged around a central pore and contain GABA active binding site(s) located at the alpha and beta subunit interface(s). When activated by GABA, GABAARs selectively allow the flow of chloride anions across the cell membrane down their electrochemical gradient. Chloride influx into the postsynaptic neuron following GABAAR opening decreases the neuron ability to generate a new action potential, thereby reducing nerve transmission. The alpha-2 subunit exhibits synaptogenic activity together with beta-2 and very little to no activity together with beta-3, the gamma-2 subunit being necessary but not sufficient to induce rapid synaptic contacts formation. The protein is Gamma-aminobutyric acid receptor subunit alpha-2 (GABRA2) of Bos taurus (Bovine).